The following is a 339-amino-acid chain: Dihydroorotate dehydrogenase (quinone) (339 aa).

FMN contacts are provided by residues 62 to 66 (AGMDK) and Thr-86. Lys-66 contributes to the substrate binding site. A substrate-binding site is contributed by 111-115 (NRMGF). Positions 139 and 172 each coordinate FMN. Asn-172 serves as a coordination point for substrate. Ser-175 serves as the catalytic Nucleophile. Asn-177 serves as a coordination point for substrate. Lys-217 and Thr-245 together coordinate FMN. A substrate-binding site is contributed by 246-247 (NT). Residues Gly-268, Gly-297, and 318-319 (YS) each bind FMN.

It belongs to the dihydroorotate dehydrogenase family. Type 2 subfamily. In terms of assembly, monomer. FMN serves as cofactor.

The protein localises to the cell membrane. It catalyses the reaction (S)-dihydroorotate + a quinone = orotate + a quinol. The protein operates within pyrimidine metabolism; UMP biosynthesis via de novo pathway; orotate from (S)-dihydroorotate (quinone route): step 1/1. In terms of biological role, catalyzes the conversion of dihydroorotate to orotate with quinone as electron acceptor. This is Dihydroorotate dehydrogenase (quinone) from Shewanella sp. (strain MR-4).